A 146-amino-acid polypeptide reads, in one-letter code: Large ribosomal subunit protein uL15 (146 aa).

Over residues 1-13 (MKLHELKPAEGSR) the composition is skewed to basic and acidic residues. A disordered region spans residues 1-51 (MKLHELKPAEGSRKVRNRVGRGIGSGNGKTAGRGHKGQNARSGGGVRLGFE). 2 stretches are compositionally biased toward gly residues: residues 21–31 (RGIGSGNGKTA) and 42–51 (SGGGVRLGFE).

The protein belongs to the universal ribosomal protein uL15 family. As to quaternary structure, part of the 50S ribosomal subunit.

In terms of biological role, binds to the 23S rRNA. The sequence is that of Large ribosomal subunit protein uL15 from Bacillus mycoides (strain KBAB4) (Bacillus weihenstephanensis).